The following is a 394-amino-acid chain: 1-deoxy-D-xylulose 5-phosphate reductoisomerase (394 aa).

NADPH is bound by residues threonine 14, glycine 15, serine 16, isoleucine 17, glycine 40, and asparagine 128. Residue lysine 129 coordinates 1-deoxy-D-xylulose 5-phosphate. Glutamate 130 provides a ligand contact to NADPH. Aspartate 154 is a binding site for Mn(2+). 1-deoxy-D-xylulose 5-phosphate is bound by residues serine 155, glutamate 156, serine 180, and histidine 203. Position 156 (glutamate 156) interacts with Mn(2+). Glycine 209 is an NADPH binding site. 1-deoxy-D-xylulose 5-phosphate-binding residues include serine 216, asparagine 221, lysine 222, and glutamate 225. Glutamate 225 is a Mn(2+) binding site.

This sequence belongs to the DXR family. The cofactor is Mg(2+). Requires Mn(2+) as cofactor.

It carries out the reaction 2-C-methyl-D-erythritol 4-phosphate + NADP(+) = 1-deoxy-D-xylulose 5-phosphate + NADPH + H(+). It functions in the pathway isoprenoid biosynthesis; isopentenyl diphosphate biosynthesis via DXP pathway; isopentenyl diphosphate from 1-deoxy-D-xylulose 5-phosphate: step 1/6. Catalyzes the NADPH-dependent rearrangement and reduction of 1-deoxy-D-xylulose-5-phosphate (DXP) to 2-C-methyl-D-erythritol 4-phosphate (MEP). The sequence is that of 1-deoxy-D-xylulose 5-phosphate reductoisomerase from Xylella fastidiosa (strain M23).